A 387-amino-acid chain; its full sequence is Eukaryotic translation initiation factor 3 subunit M (387 aa).

In terms of domain architecture, PCI spans 181–340 (LSSKVMIELL…RKVHISSTMH (160 aa)).

This sequence belongs to the eIF-3 subunit M family. As to quaternary structure, component of the eukaryotic translation initiation factor 3 (eIF-3) complex. The eIF-3 complex interacts with pix.

The protein resides in the cytoplasm. It localises to the golgi apparatus. Functionally, component of the eukaryotic translation initiation factor 3 (eIF-3) complex, which is involved in protein synthesis of a specialized repertoire of mRNAs and, together with other initiation factors, stimulates binding of mRNA and methionyl-tRNAi to the 40S ribosome. The eIF-3 complex specifically targets and initiates translation of a subset of mRNAs involved in cell proliferation. In Drosophila ananassae (Fruit fly), this protein is Eukaryotic translation initiation factor 3 subunit M.